An 84-amino-acid chain; its full sequence is Exodeoxyribonuclease 7 small subunit (84 aa).

It belongs to the XseB family. As to quaternary structure, heterooligomer composed of large and small subunits.

The protein localises to the cytoplasm. It carries out the reaction Exonucleolytic cleavage in either 5'- to 3'- or 3'- to 5'-direction to yield nucleoside 5'-phosphates.. Its function is as follows. Bidirectionally degrades single-stranded DNA into large acid-insoluble oligonucleotides, which are then degraded further into small acid-soluble oligonucleotides. The protein is Exodeoxyribonuclease 7 small subunit of Yersinia pseudotuberculosis serotype O:1b (strain IP 31758).